The primary structure comprises 1697 residues: UDP-sugar-dependent glycosyltransferase 52 (1697 aa).

Disordered regions lie at residues 20–40 and 142–166; these read HSDSLSSVGSSSNRSNSNYEN and STDLSNIKTTTTTTTTTTPPPLMIP. Residues 234 to 332 enclose the PH domain; that stretch reads DYVLENYLYK…WYHEINRMQK (99 aa). 2 disordered regions span residues 573–645 and 707–756; these read FRSK…TTHE and PLDK…KQSQ. Composition is skewed to low complexity over residues 584–628 and 711–722; these read QNSQ…SSSA and QQQQQQQQQQQQ. GRAM domains are found at residues 658–793 and 881–948; these read STFH…TKER and IKIK…KKYS. Positions 739-749 are enriched in acidic residues; it reads TDSDTDSESDF. Disordered regions lie at residues 1011-1047, 1062-1085, 1110-1130, and 1466-1488; these read SPSIASPSITPPSSTPPSSTTPSSTTPTITSPTIHST, DGENNSNNNNNNNNTNNTNKSNSF, SAQQQQQQQPKTTTTTTSTTT, and EHNNNNNNNNNNNNGENSDSNKS. Composition is skewed to low complexity over residues 1026-1047, 1065-1084, 1112-1130, and 1469-1479; these read PPSSTTPSSTTPTITSPTIHST, NNSNNNNNNNNTNNTNKSNS, QQQQQQQPKTTTTTTSTTT, and NNNNNNNNNNN. The segment at 1622-1685 adopts an FYVE-type zinc-finger fold; that stretch reads SSAPNSCMGC…VCDKCFNDLQ (64 aa). Zn(2+) contacts are provided by cysteine 1628, cysteine 1631, cysteine 1647, cysteine 1650, cysteine 1655, cysteine 1658, cysteine 1677, and cysteine 1680.

It belongs to the glycosyltransferase 28 family.

It carries out the reaction a sterol + UDP-alpha-D-glucose = a sterol 3-beta-D-glucoside + UDP + H(+). Functionally, involved in the biosynthesis of sterol glucoside. Can use different sterols such as cholesterol, sitosterol, and ergosterol as sugar acceptors. This chain is UDP-sugar-dependent glycosyltransferase 52 (ugt52), found in Dictyostelium discoideum (Social amoeba).